The following is a 119-amino-acid chain: uncharacterized protein (119 aa).

Positions 67–119 (LGLKEVQKKSNEGLNEVQGVADINKQKRPANSQDSSSVEGDIQNFLEKVTGKN) are disordered. Positions 95-104 (PANSQDSSSV) are enriched in polar residues.

This is an uncharacterized protein from Anabaena variabilis.